We begin with the raw amino-acid sequence, 276 residues long: Rhomboid protease GlpG (276 aa).

6 helical membrane passes run 94–114 (GPVT…MSLI), 142–162 (IFMH…WYLG), 169–189 (LGSG…GYVQ), 192–212 (FSGP…GYVW), 229–249 (LIIF…GMSM), and 250–270 (ANGA…VDTL). The active-site Nucleophile is the Ser-201. The active site involves His-254.

Belongs to the peptidase S54 family.

The protein localises to the cell inner membrane. It carries out the reaction Cleaves type-1 transmembrane domains using a catalytic dyad composed of serine and histidine that are contributed by different transmembrane domains.. Its function is as follows. Rhomboid-type serine protease that catalyzes intramembrane proteolysis. In Salmonella dublin (strain CT_02021853), this protein is Rhomboid protease GlpG.